The primary structure comprises 361 residues: Aromatic amino acid aminotransferase (361 aa).

Lys215 carries the post-translational modification N6-(pyridoxal phosphate)lysine.

Belongs to the class-II pyridoxal-phosphate-dependent aminotransferase family. In terms of assembly, homodimer. Requires pyridoxal 5'-phosphate as cofactor.

It carries out the reaction an aromatic L-alpha-amino acid + 2-oxoglutarate = an aromatic oxo-acid + L-glutamate. In terms of biological role, aminotransferase that catalyzes the conversion of aromatic amino acids and 2-oxoglutarate into corresponding aromatic oxo acids and L-glutamate. The protein is Aromatic amino acid aminotransferase of Mycolicibacterium smegmatis (strain ATCC 700084 / mc(2)155) (Mycobacterium smegmatis).